The sequence spans 608 residues: DNA mismatch repair protein MutL (608 aa).

This sequence belongs to the DNA mismatch repair MutL/HexB family.

In terms of biological role, this protein is involved in the repair of mismatches in DNA. It is required for dam-dependent methyl-directed DNA mismatch repair. May act as a 'molecular matchmaker', a protein that promotes the formation of a stable complex between two or more DNA-binding proteins in an ATP-dependent manner without itself being part of a final effector complex. The chain is DNA mismatch repair protein MutL from Anoxybacillus flavithermus (strain DSM 21510 / WK1).